Reading from the N-terminus, the 1004-residue chain is 2-oxoglutarate dehydrogenase E1 component (1004 aa).

This sequence belongs to the alpha-ketoglutarate dehydrogenase family. Homodimer. Part of the 2-oxoglutarate dehydrogenase (OGDH) complex composed of E1 (2-oxoglutarate dehydrogenase), E2 (dihydrolipoamide succinyltransferase) and E3 (dihydrolipoamide dehydrogenase); the complex contains multiple copies of the three enzymatic components (E1, E2 and E3). Requires thiamine diphosphate as cofactor.

It carries out the reaction N(6)-[(R)-lipoyl]-L-lysyl-[protein] + 2-oxoglutarate + H(+) = N(6)-[(R)-S(8)-succinyldihydrolipoyl]-L-lysyl-[protein] + CO2. In terms of biological role, E1 component of the 2-oxoglutarate dehydrogenase (OGDH) complex which catalyzes the decarboxylation of 2-oxoglutarate, the first step in the conversion of 2-oxoglutarate to succinyl-CoA and CO(2). This is 2-oxoglutarate dehydrogenase E1 component from Brucella suis biovar 1 (strain 1330).